Consider the following 243-residue polypeptide: MLLSLHQLSVKFGKHLILDRINISIGRGEIVTIVGPNGSGKSTLLKTLIGAIKPVSGCIERAEKLKVGYVPQRLHIDEALPMTVFRFLTLPVQRSKKTISQALVRAGIPGVEKQQLNSLSGGQLQRVLLARALLEEPMLLLLDEATQGLDQRGTVDFYQHIDSFRKETGCAIIMVSHDLHVVMKNTDRVICLNGQICCEGTPEKVSNSPEYKVLFGLDDNDVLGVYRHKAASNQFNGSVLNVG.

The ABC transporter domain occupies 3 to 218; it reads LSLHQLSVKF…PEYKVLFGLD (216 aa). Residue 35–42 coordinates ATP; the sequence is GPNGSGKS.

Belongs to the ABC transporter superfamily. Zinc importer (TC 3.A.1.15.5) family. The complex is composed of two ATP-binding proteins (ZnuC), two transmembrane proteins (ZnuB) and a solute-binding protein (ZnuA).

It is found in the cell inner membrane. It catalyses the reaction Zn(2+)(out) + ATP(in) + H2O(in) = Zn(2+)(in) + ADP(in) + phosphate(in) + H(+)(in). Its function is as follows. Part of the ABC transporter complex ZnuABC involved in zinc import. Responsible for energy coupling to the transport system. The sequence is that of Zinc import ATP-binding protein ZnuC 2 from Aliivibrio fischeri (strain ATCC 700601 / ES114) (Vibrio fischeri).